The following is a 217-amino-acid chain: Probable transaldolase (217 aa).

Lys83 (schiff-base intermediate with substrate) is an active-site residue.

It belongs to the transaldolase family. Type 3B subfamily.

It localises to the cytoplasm. It carries out the reaction D-sedoheptulose 7-phosphate + D-glyceraldehyde 3-phosphate = D-erythrose 4-phosphate + beta-D-fructose 6-phosphate. Its pathway is carbohydrate degradation; pentose phosphate pathway; D-glyceraldehyde 3-phosphate and beta-D-fructose 6-phosphate from D-ribose 5-phosphate and D-xylulose 5-phosphate (non-oxidative stage): step 2/3. Transaldolase is important for the balance of metabolites in the pentose-phosphate pathway. This Dinoroseobacter shibae (strain DSM 16493 / NCIMB 14021 / DFL 12) protein is Probable transaldolase.